The following is a 167-amino-acid chain: Pathogenesis-related protein PRMS (167 aa).

Positions 1–27 are cleaved as a signal peptide; sequence MEASNKLAVLLLWLVMAAATAVHPSYS. The region spanning 37-155 is the SCP domain; sequence PQNSARAAVG…NRGVFIICNY (119 aa). 3 disulfide bridges follow: C71–C143, C116–C122, and C138–C153.

This sequence belongs to the CRISP family.

In terms of biological role, probably involved in the defense reaction of plants against pathogens. The sequence is that of Pathogenesis-related protein PRMS (PRMS) from Zea mays (Maize).